A 603-amino-acid polypeptide reads, in one-letter code: Adenine deaminase 1 (603 aa).

It belongs to the metallo-dependent hydrolases superfamily. Adenine deaminase family. It depends on Mn(2+) as a cofactor.

It catalyses the reaction adenine + H2O + H(+) = hypoxanthine + NH4(+). This chain is Adenine deaminase 1, found in Carboxydothermus hydrogenoformans (strain ATCC BAA-161 / DSM 6008 / Z-2901).